The sequence spans 435 residues: MAAPLETVMTPCQRFDGRNGASATPKSLAFSIERIMAKTSEPKAAAFQPSQGLDPGAKKMLNLCSPLPCMIPIQSLAYDVHSKALLNYSELWKSSLRGSVCSPSGLCKSNCGICCKNDLNMGHTVLPGSRVIKPQVINQTVGLPTNGSLYYFNYLDSSFHPPEILSGQLLSSSLINAQSQATLSAQQKLFLLENAKLSGLAPEKFPNPQYPHKERLPGQLDQVMKENSALSADRSGKIHSKLGANSAEGKPKIFTCEVCGKVFNAHYNLTRHMPVHTGARPFVCKVCGKGFRQASTLCRHKIIHTQEKPHKCNQCGKAFNRSSTLNTHIRIHAGYKPFVCEFCGKGFHQKGNYKNHKLTHSGEKQYKCTICNKAFHQIYNLTFHMHTHNDKKPFTCGTCGKGFCRNFDLKKHVRKLHDNVSSSCSLKEISRTGQS.

The short motif at 27–42 (SLAFSIERIMAKTSEP) is the Engrailed homology 1 repressor element. 6 consecutive C2H2-type zinc fingers follow at residues 254-276 (FTCEVCGKVFNAHYNLTRHMPVH), 282-304 (FVCKVCGKGFRQASTLCRHKIIH), 310-332 (HKCNQCGKAFNRSSTLNTHIRIH), 338-360 (FVCEFCGKGFHQKGNYKNHKLTH), 366-388 (YKCTICNKAFHQIYNLTFHMHTH), and 394-417 (FTCGTCGKGFCRNFDLKKHVRKLH).

This sequence belongs to the krueppel C2H2-type zinc-finger protein family.

It is found in the nucleus. Its function is as follows. Transcription repressor. Component of the regulatory cascade that controls the development of dopaminergic (DA) and serotonergic (5HT) neurons. The chain is Fez family zinc finger protein 2 (fezf2) from Xenopus tropicalis (Western clawed frog).